A 226-amino-acid chain; its full sequence is ATP synthase F(0) complex subunit a (226 aa).

6 helical membrane-spanning segments follow: residues 12–32 (PTMM…ILFP), 68–88 (WALM…LGLL), 97–117 (QLSM…ITGF), 138–158 (IPML…ALAV), 164–184 (ITAG…LMDI), and 189–209 (AFIT…VALI).

It belongs to the ATPase A chain family. In terms of assembly, component of the ATP synthase complex composed at least of ATP5F1A/subunit alpha, ATP5F1B/subunit beta, ATP5MC1/subunit c (homooctomer), MT-ATP6/subunit a, MT-ATP8/subunit 8, ATP5ME/subunit e, ATP5MF/subunit f, ATP5MG/subunit g, ATP5MK/subunit k, ATP5MJ/subunit j, ATP5F1C/subunit gamma, ATP5F1D/subunit delta, ATP5F1E/subunit epsilon, ATP5PF/subunit F6, ATP5PB/subunit b, ATP5PD/subunit d, ATP5PO/subunit OSCP. ATP synthase complex consists of a soluble F(1) head domain (subunits alpha(3) and beta(3)) - the catalytic core - and a membrane F(0) domain - the membrane proton channel (subunits c, a, 8, e, f, g, k and j). These two domains are linked by a central stalk (subunits gamma, delta, and epsilon) rotating inside the F1 region and a stationary peripheral stalk (subunits F6, b, d, and OSCP). Interacts with DNAJC30; interaction is direct.

It localises to the mitochondrion inner membrane. The catalysed reaction is H(+)(in) = H(+)(out). In terms of biological role, subunit a, of the mitochondrial membrane ATP synthase complex (F(1)F(0) ATP synthase or Complex V) that produces ATP from ADP in the presence of a proton gradient across the membrane which is generated by electron transport complexes of the respiratory chain. ATP synthase complex consist of a soluble F(1) head domain - the catalytic core - and a membrane F(1) domain - the membrane proton channel. These two domains are linked by a central stalk rotating inside the F(1) region and a stationary peripheral stalk. During catalysis, ATP synthesis in the catalytic domain of F(1) is coupled via a rotary mechanism of the central stalk subunits to proton translocation. With the subunit c (ATP5MC1), forms the proton-conducting channel in the F(0) domain, that contains two crucial half-channels (inlet and outlet) that facilitate proton movement from the mitochondrial intermembrane space (IMS) into the matrix. Protons are taken up via the inlet half-channel and released through the outlet half-channel, following a Grotthuss mechanism. The protein is ATP synthase F(0) complex subunit a of Phoca vitulina (Harbor seal).